A 243-amino-acid polypeptide reads, in one-letter code: MKKHDNIYAKALNKVDDFKFDESVVDVFPDMIQRSVPGYETIVHTIGELAKSSVTPNSMVYDLGCSLGAASLSVSRAVSANTCEIIGVDASSAMVERCRRVVQTFTLPNPISIEQGLAQDVDINNASMVVMNFTLQFIPPSDREGLLASIYKGLNPGGILVLSEKVKHPTRSGNELLIDLHHQFKRDNGYSELEVSQKRAALEKVMLTDTFNEHETRLKKVGFADVVMWYKCYNFTSMVAIKA.

Residues tyrosine 39, 64–66, asparagine 132, and arginine 199 each bind S-adenosyl-L-methionine; that span reads GCS.

Belongs to the class I-like SAM-binding methyltransferase superfamily. Cx-SAM synthase family. As to quaternary structure, homodimer.

It carries out the reaction prephenate + S-adenosyl-L-methionine = carboxy-S-adenosyl-L-methionine + 3-phenylpyruvate + H2O. Catalyzes the conversion of S-adenosyl-L-methionine (SAM) to carboxy-S-adenosyl-L-methionine (Cx-SAM). The polypeptide is Carboxy-S-adenosyl-L-methionine synthase (Alteromonas mediterranea (strain DSM 17117 / CIP 110805 / LMG 28347 / Deep ecotype)).